Consider the following 380-residue polypeptide: Crotonobetainyl-CoA reductase (380 aa).

It belongs to the acyl-CoA dehydrogenase family. Homotetramer. FAD is required as a cofactor.

The protein localises to the cytoplasm. The catalysed reaction is 4-(trimethylamino)butanoyl-CoA + oxidized [electron-transfer flavoprotein] + H(+) = crotonobetainyl-CoA + reduced [electron-transfer flavoprotein]. It functions in the pathway amine and polyamine metabolism; carnitine metabolism. Functionally, catalyzes the reduction of crotonobetainyl-CoA to gamma-butyrobetainyl-CoA. This chain is Crotonobetainyl-CoA reductase, found in Salmonella arizonae (strain ATCC BAA-731 / CDC346-86 / RSK2980).